The following is a 78-amino-acid chain: Exodeoxyribonuclease 7 small subunit (78 aa).

The protein belongs to the XseB family. In terms of assembly, heterooligomer composed of large and small subunits.

The protein resides in the cytoplasm. It catalyses the reaction Exonucleolytic cleavage in either 5'- to 3'- or 3'- to 5'-direction to yield nucleoside 5'-phosphates.. Bidirectionally degrades single-stranded DNA into large acid-insoluble oligonucleotides, which are then degraded further into small acid-soluble oligonucleotides. In Actinobacillus succinogenes (strain ATCC 55618 / DSM 22257 / CCUG 43843 / 130Z), this protein is Exodeoxyribonuclease 7 small subunit.